The chain runs to 671 residues: DNA ligase (671 aa).

Residues 38 to 42 (DKEFD), 87 to 88 (SL), and Glu-113 contribute to the NAD(+) site. Lys-115 (N6-AMP-lysine intermediate) is an active-site residue. 4 residues coordinate NAD(+): Arg-136, Glu-170, Lys-282, and Lys-306. Residues Cys-396, Cys-399, Cys-414, and Cys-419 each coordinate Zn(2+). Positions 586-671 (SDLQPFVGQS…LLKQEGIAID (86 aa)) constitute a BRCT domain.

The protein belongs to the NAD-dependent DNA ligase family. LigA subfamily. Requires Mg(2+) as cofactor. Mn(2+) serves as cofactor.

The enzyme catalyses NAD(+) + (deoxyribonucleotide)n-3'-hydroxyl + 5'-phospho-(deoxyribonucleotide)m = (deoxyribonucleotide)n+m + AMP + beta-nicotinamide D-nucleotide.. Functionally, DNA ligase that catalyzes the formation of phosphodiester linkages between 5'-phosphoryl and 3'-hydroxyl groups in double-stranded DNA using NAD as a coenzyme and as the energy source for the reaction. It is essential for DNA replication and repair of damaged DNA. This Leptospira biflexa serovar Patoc (strain Patoc 1 / Ames) protein is DNA ligase.